We begin with the raw amino-acid sequence, 90 residues long: Small ribosomal subunit protein bS16 (90 aa).

The protein belongs to the bacterial ribosomal protein bS16 family.

In Shouchella clausii (strain KSM-K16) (Alkalihalobacillus clausii), this protein is Small ribosomal subunit protein bS16.